A 101-amino-acid polypeptide reads, in one-letter code: Integration host factor subunit alpha (101 aa).

Belongs to the bacterial histone-like protein family. In terms of assembly, heterodimer of an alpha and a beta chain.

In terms of biological role, this protein is one of the two subunits of integration host factor, a specific DNA-binding protein that functions in genetic recombination as well as in transcriptional and translational control. In Halorhodospira halophila (strain DSM 244 / SL1) (Ectothiorhodospira halophila (strain DSM 244 / SL1)), this protein is Integration host factor subunit alpha.